The following is a 474-amino-acid chain: tRNA-2-methylthio-N(6)-dimethylallyladenosine synthase (474 aa).

The region spanning 3–120 is the MTTase N-terminal domain; it reads KKLHIKTWGC…LPDMIEQVRR (118 aa). 6 residues coordinate [4Fe-4S] cluster: Cys-12, Cys-49, Cys-83, Cys-157, Cys-161, and Cys-164. The region spanning 143–375 is the Radical SAM core domain; that stretch reads RAEGPTAFVS…QDRITQQAMR (233 aa). Residues 378–441 enclose the TRAM domain; the sequence is RHMMGTVQRI…TNSLRGKFIR (64 aa).

The protein belongs to the methylthiotransferase family. MiaB subfamily. In terms of assembly, monomer. Requires [4Fe-4S] cluster as cofactor.

It localises to the cytoplasm. The enzyme catalyses N(6)-dimethylallyladenosine(37) in tRNA + (sulfur carrier)-SH + AH2 + 2 S-adenosyl-L-methionine = 2-methylsulfanyl-N(6)-dimethylallyladenosine(37) in tRNA + (sulfur carrier)-H + 5'-deoxyadenosine + L-methionine + A + S-adenosyl-L-homocysteine + 2 H(+). Catalyzes the methylthiolation of N6-(dimethylallyl)adenosine (i(6)A), leading to the formation of 2-methylthio-N6-(dimethylallyl)adenosine (ms(2)i(6)A) at position 37 in tRNAs that read codons beginning with uridine. The protein is tRNA-2-methylthio-N(6)-dimethylallyladenosine synthase of Shewanella sp. (strain MR-4).